The sequence spans 495 residues: Glycogen synthase (495 aa).

K15 serves as a coordination point for ADP-alpha-D-glucose.

The protein belongs to the glycosyltransferase 1 family. Bacterial/plant glycogen synthase subfamily.

The catalysed reaction is [(1-&gt;4)-alpha-D-glucosyl](n) + ADP-alpha-D-glucose = [(1-&gt;4)-alpha-D-glucosyl](n+1) + ADP + H(+). It functions in the pathway glycan biosynthesis; glycogen biosynthesis. Synthesizes alpha-1,4-glucan chains using ADP-glucose. The protein is Glycogen synthase of Variovorax paradoxus (strain S110).